We begin with the raw amino-acid sequence, 238 residues long: Cell division protein A (238 aa).

Interacts with CdvB.

It localises to the cytoplasm. The protein localises to the nucleoid. It is found in the cell membrane. Functionally, part of a cell division machinery. The CdvA, CdvB and CdvC proteins polymerize between segregating nucleoids and persist throughout cell division, forming a successively smaller structure during constriction. CdvA is a membrane interacting protein that recruits ESCRT-III homologs to the membrane. This is Cell division protein A from Sulfolobus acidocaldarius (strain ATCC 33909 / DSM 639 / JCM 8929 / NBRC 15157 / NCIMB 11770).